Consider the following 427-residue polypeptide: Trigger factor (427 aa).

A PPIase FKBP-type domain is found at 163 to 248; sequence GDTVVIDFVG…IHEVKAKEVP (86 aa).

The protein belongs to the FKBP-type PPIase family. Tig subfamily.

It localises to the cytoplasm. The catalysed reaction is [protein]-peptidylproline (omega=180) = [protein]-peptidylproline (omega=0). In terms of biological role, involved in protein export. Acts as a chaperone by maintaining the newly synthesized protein in an open conformation. Functions as a peptidyl-prolyl cis-trans isomerase. The sequence is that of Trigger factor from Streptococcus pneumoniae (strain Hungary19A-6).